A 251-amino-acid chain; its full sequence is D-aminoacyl-tRNA deacylase (251 aa).

This sequence belongs to the DtdA deacylase family. As to quaternary structure, monomer. Requires Zn(2+) as cofactor.

The enzyme catalyses a D-aminoacyl-tRNA + H2O = a tRNA + a D-alpha-amino acid + H(+). It catalyses the reaction glycyl-tRNA(Ala) + H2O = tRNA(Ala) + glycine + H(+). Functionally, D-aminoacyl-tRNA deacylase with broad substrate specificity. By recycling D-aminoacyl-tRNA to D-amino acids and free tRNA molecules, this enzyme counteracts the toxicity associated with the formation of D-aminoacyl-tRNA entities in vivo. This Pyrobaculum calidifontis (strain DSM 21063 / JCM 11548 / VA1) protein is D-aminoacyl-tRNA deacylase.